The following is a 246-amino-acid chain: Flavin-dependent thymidylate synthase (246 aa).

The region spanning 17 to 241 is the ThyX domain; that stretch reads VTVELVKHSA…PLTYAAFNTN (225 aa). Residues serine 69, 92 to 94, and glutamate 101 contribute to the FAD site; that span reads RHR. DUMP-binding positions include 89-92, 101-105, and arginine 173; these read EFMR and EESGR. A ThyX motif motif is present at residues 92–103; that stretch reads RHRVGWSYNEES. FAD-binding positions include 189-191 and histidine 195; that span reads NAR. Arginine 200 serves as a coordination point for dUMP. Arginine 200 functions as the Involved in ionization of N3 of dUMP, leading to its activation in the catalytic mechanism.

It belongs to the thymidylate synthase ThyX family. In terms of assembly, homotetramer. The cofactor is FAD.

The enzyme catalyses dUMP + (6R)-5,10-methylene-5,6,7,8-tetrahydrofolate + NADPH + H(+) = dTMP + (6S)-5,6,7,8-tetrahydrofolate + NADP(+). Its pathway is pyrimidine metabolism; dTTP biosynthesis. In terms of biological role, catalyzes the reductive methylation of 2'-deoxyuridine-5'-monophosphate (dUMP) to 2'-deoxythymidine-5'-monophosphate (dTMP) while utilizing 5,10-methylenetetrahydrofolate (mTHF) as the methyl donor, and NADPH and FADH(2) as the reductant. This Streptomyces avermitilis (strain ATCC 31267 / DSM 46492 / JCM 5070 / NBRC 14893 / NCIMB 12804 / NRRL 8165 / MA-4680) protein is Flavin-dependent thymidylate synthase.